A 557-amino-acid chain; its full sequence is MVEVQDLEPLSPIQDYDEDDLEEDVDEFERFGEEISYDDLKKRMWKDRNLMCKLKQQKRDNLNSVISSPSSSTSASSSSSSSVIVRRTEASRRKKMARSQDSVLKYMMKIMEVCKAQGFVYGIVPEKGKPVTGSSDSLRRWWKENVQFDQTAPNAVSDYLTLAAAQLISSNESLDPNSYIHMLHELQDTTLGSLLSALMQHCVPPQRRFPLEKGLAPPWWPNGTELWWGEQGAAAFEHGPPPYRKPHDLRKAWKVSVLAAVIKHMSPNLERVRRLARQSKCLQDKMMAKETDTWSRVLNQEEARLNRLKISDDEDEDRDQEQARFTCFDQEPSLNTCFIVGQDQEPLGSMRKDKRVDQEFSSNDCFLVAQDQEPRKGKKADQEWSPNSCFLVDQEPLGNKRKGEFVEKEAMLSNVYTCQNSSCPSSDVSLGFVDKNLRTGHEIECLYGTPELVNQSSGGGSDGFVRSITTSDDDYSASSKAEDTRDYHNQDGNWLDYLWFERLHDLNFSDQGFEDQTSTVDLNQLPDHSDSNQTMNEDDISLWDMGCEDKDIYMSQD.

Disordered stretches follow at residues M1 to E23 and N61 to M96. Residues S64–S82 are compositionally biased toward low complexity. A coiled-coil region spans residues E270–S311.

Belongs to the EIN3 family.

It localises to the nucleus. Putative transcription factor that may be involved in the ethylene response pathway. In Arabidopsis thaliana (Mouse-ear cress), this protein is ETHYLENE INSENSITIVE 3-like 5 protein (EIL5).